Consider the following 117-residue polypeptide: Glutamine-rich protein (117 aa).

Low complexity predominate over residues 27 to 72 (RQQFQQQQQQQRQPQLQQQQQQQGIQQQPQGLQHQQQQFGLTQQHG). The disordered stretch occupies residues 27–88 (RQQFQQQQQQ…IVQPNPASQN (62 aa)). The span at 75–87 (RRQNIVQPNPASQ) shows a compositional bias: polar residues.

In terms of tissue distribution, component of the acid-soluble and acid-insoluble organic matrix of calcified shell layers (at protein level).

The protein resides in the secreted. The polypeptide is Glutamine-rich protein (Haliotis asinina (Donkey's ear abalone)).